The following is a 152-amino-acid chain: Small ribosomal subunit protein uS5 (152 aa).

In terms of domain architecture, S5 DRBM spans 14-77 (FEEVIVNIGR…DDAHKNLVKV (64 aa)).

This sequence belongs to the universal ribosomal protein uS5 family. Part of the 30S ribosomal subunit. Contacts proteins S4 and S8.

In terms of biological role, with S4 and S12 plays an important role in translational accuracy. Its function is as follows. Located at the back of the 30S subunit body where it stabilizes the conformation of the head with respect to the body. The protein is Small ribosomal subunit protein uS5 of Sulfurovum sp. (strain NBC37-1).